We begin with the raw amino-acid sequence, 110 residues long: uncharacterized protein (110 aa).

The chain crosses the membrane as a helical span at residues 18–34 (MFPLISTFTSIGLGVLM).

It is found in the membrane. This is an uncharacterized protein from Saccharomyces cerevisiae (strain ATCC 204508 / S288c) (Baker's yeast).